We begin with the raw amino-acid sequence, 1193 residues long: uncharacterized protein (1193 aa).

The first 25 residues, 1 to 25 (MKIKFINYLLLFFIIFLNYNGFVKS), serve as a signal peptide directing secretion. Topologically, residues 26 to 1172 (DCYQELDLVL…PQDPSDELST (1147 aa)) are extracellular. N-linked (GlcNAc...) asparagine glycosylation is found at asparagine 90, asparagine 183, asparagine 226, asparagine 265, asparagine 281, asparagine 345, asparagine 357, asparagine 436, asparagine 516, asparagine 552, asparagine 583, asparagine 627, asparagine 712, asparagine 765, asparagine 822, asparagine 938, asparagine 1038, and asparagine 1092. Residues 1173-1193 (SSFVQVNLLFLSILIFTIFIF) form a helical membrane-spanning segment.

It is found in the membrane. This is an uncharacterized protein from Dictyostelium discoideum (Social amoeba).